Reading from the N-terminus, the 1401-residue chain is DNA-directed RNA polymerase subunit beta' (1401 aa).

Residues Cys-70, Cys-72, Cys-85, and Cys-88 each coordinate Zn(2+). Mg(2+)-binding residues include Asp-460, Asp-462, and Asp-464. 4 residues coordinate Zn(2+): Cys-808, Cys-882, Cys-889, and Cys-892.

It belongs to the RNA polymerase beta' chain family. As to quaternary structure, the RNAP catalytic core consists of 2 alpha, 1 beta, 1 beta' and 1 omega subunit. When a sigma factor is associated with the core the holoenzyme is formed, which can initiate transcription. Requires Mg(2+) as cofactor. Zn(2+) is required as a cofactor.

The catalysed reaction is RNA(n) + a ribonucleoside 5'-triphosphate = RNA(n+1) + diphosphate. In terms of biological role, DNA-dependent RNA polymerase catalyzes the transcription of DNA into RNA using the four ribonucleoside triphosphates as substrates. This is DNA-directed RNA polymerase subunit beta' from Legionella pneumophila (strain Paris).